The primary structure comprises 274 residues: MNRTAFCCLSLTTALILTACSSGGGGVAADIGAGLADALTAPLDHKDKGLQSLTLDQSVRKNEKLKLAAQGAEKTYGNGDSLNTGKLKNDKVSRFDFIRQIEVDGQLITLESGEFQVYKQSHSALTAFQTEQIQDSEHSGKMVAKRQFRIGDIAGEHTSFDKLPEGGRATYRGTAFGSDDAGGKLTYTIDFAAKQGNGKIEHLKSPELNVDLAAADIKPDGKRHAVISGSVLYNQAEKGSYSLGIFGGKAQEVAGSAEVKTVNGIRHIGLAAKQ.

Residues 1–19 (MNRTAFCCLSLTTALILTA) form the signal peptide. Residue Cys20 is the site of N-palmitoyl cysteine attachment. Residue Cys20 is the site of S-diacylglycerol cysteine attachment. A domain A region spans residues 27–119 (VAADIGAGLA…LESGEFQVYK (93 aa)). Positions 120-183 (QSHSALTAFQ…TAFGSDDAGG (64 aa)) are domain B. The segment at 184–274 (KLTYTIDFAA…IRHIGLAAKQ (91 aa)) is domain C.

The protein belongs to the factor H binding-protein family. As to quaternary structure, binds to host factor H (fH from human). Both fHbp beta-barrels contact Sushi domains 6 and 7 in fH (also called complement control protein domains, CCP). This interaction probably mimics the normal (carbohydrate-dependent) mode of fH recruitement, regulating fH activity. Sucrose octasulphate inhibits the fHbp-fH interaction. Post-translationally, protein is lipidated in N.meningitidis upon growth in radioactive palmitic acid, probably on Cys-20.

It is found in the cell outer membrane. The protein resides in the secreted. Its subcellular location is the extracellular vesicle. The protein localises to the bacterial extracellular vesicle. Its function is as follows. A bacterial surface lipoprotein that binds host (human) complement factor H (fH, gene CFH), binding contributes to the avoidance of complement-mediated lysis by N.meningitidis. Binding of fH to the bacteria surface is independent of bacterial sialic acid moieties. fH binding affinity is high enough that it may sequester plasma fH, depleting its circulating levels and de-regulating complement in the host. This protein induces high levels of bactericidal antibodies in mice. The protein is Factor H binding protein (fhbP) of Neisseria meningitidis serogroup B (strain ATCC BAA-335 / MC58).